The primary structure comprises 817 residues: LisH domain-containing protein ARMC9 (817 aa).

The 33-residue stretch at 15–47 (SESDLLSMISEYLKFGEFEETARTFEKEVKRKG) folds into the LisH domain. 3 disordered regions span residues 580–605 (SATIPEQEPESDDEEDEDDDDDEEDV), 610–629 (LDKEEVLQPQPKELSGESLL), and 642–817 (KTKR…SNRK). Positions 586-605 (QEPESDDEEDEDDDDDEEDV) are enriched in acidic residues. Composition is skewed to polar residues over residues 692–715 (SSRPATRTGSRPSTAESIHQTLAT) and 740–750 (GQTTNSVQSYS). Positions 805 to 817 (GRPSQQSSQSNRK) are enriched in low complexity.

In terms of tissue distribution, expressed in multiple CNS regions, including the cerebellum, all periventricular regions, and all layers of the retina.

The protein resides in the cytoplasm. The protein localises to the cytoskeleton. It localises to the cilium basal body. It is found in the cell projection. Its subcellular location is the cilium. The protein resides in the microtubule organizing center. The protein localises to the centrosome. It localises to the centriole. Its function is as follows. Involved in ciliogenesis. It is required for appropriate acetylation and polyglutamylation of ciliary microtubules, and regulation of cilium length. Acts as a positive regulator of hedgehog (Hh) signaling. The protein is LisH domain-containing protein ARMC9 (armc9) of Danio rerio (Zebrafish).